Here is a 103-residue protein sequence, read N- to C-terminus: Large ribosomal subunit protein P1 (103 aa).

Residues 66 to 103 form a disordered region; it reads PAAGAPAAGAAGGAVEEKKEEKKAESEDESDDDMGLFD. Over residues 80–90 the composition is skewed to basic and acidic residues; it reads VEEKKEEKKAE. A compositionally biased stretch (acidic residues) spans 91–103; the sequence is SEDESDDDMGLFD.

This sequence belongs to the eukaryotic ribosomal protein P1/P2 family. As to quaternary structure, P1 and P2 exist as dimers at the large ribosomal subunit.

Its function is as follows. Plays an important role in the elongation step of protein synthesis. This Polyorchis penicillatus (Hydromedusa) protein is Large ribosomal subunit protein P1.